The primary structure comprises 416 residues: Protein-glutamine gamma-glutamyltransferase (416 aa).

Residues 1–29 (MHKRRRLLAFATVGAVICTAGFTPSVSQA) constitute a signal peptide (tat-type signal). A propeptide spanning residues 30 to 85 (ASSGDGEEKGSYAETHGLTADDVESINALNERALTLGQPGKPPKELPPSASAPSRA) is cleaved from the precursor. Residues 64–103 (TLGQPGKPPKELPPSASAPSRAPSDDRETPPAEPLDRMPE) are disordered. A compositionally biased stretch (low complexity) spans 76–85 (PPSASAPSRA). Residues 86 to 103 (PSDDRETPPAEPLDRMPE) are compositionally biased toward basic and acidic residues. Residue Cys-149 is part of the active site. The interval 290–331 (GQDQRGSSDKRKYGDPEAFRPDQGTGLVDMSKDRSIPRSPAK) is disordered. A compositionally biased stretch (basic and acidic residues) spans 295–309 (GSSDKRKYGDPEAFR). Residues Asp-340 and His-359 contribute to the active site.

This sequence belongs to the bacterial TGase family. In terms of processing, predicted to be exported by the Tat system. The position of the signal peptide cleavage has not been experimentally proven.

The catalysed reaction is L-glutaminyl-[protein] + L-lysyl-[protein] = [protein]-L-lysyl-N(6)-5-L-glutamyl-[protein] + NH4(+). Functionally, catalyzes the cross-linking of proteins and the conjugation of polyamines to proteins. The protein is Protein-glutamine gamma-glutamyltransferase of Streptomyces cinnamoneus (Streptoverticillium cinnamoneum).